Here is a 445-residue protein sequence, read N- to C-terminus: Protein cereblon (445 aa).

Residues 1 to 50 (MAAEEGGDGRRNMGNPPPPAPAESEEEDDNEMEVEDQDGKEAEKPNMINF) are disordered. The span at 23–36 (ESEEEDDNEMEVED) shows a compositional bias: acidic residues. The Lon N-terminal domain occupies 82-321 (IPVLPHVMVM…CELDIMNKCT (240 aa)). Residues 320-428 (CTSLCCKQCQ…LTRSALLPRI (109 aa)) enclose the CULT domain. 2 residues coordinate Zn(2+): C325 and C328. H380, W382, and W388 together coordinate (S)-thalidomide. Positions 393 and 396 each coordinate Zn(2+).

Belongs to the CRBN family. Component of a DCX (DDB1-CUL4-X-box) protein ligase complex. Interacts directly with DDB1.

Its subcellular location is the cytoplasm. It is found in the nucleus. It functions in the pathway protein modification; protein ubiquitination. In terms of biological role, substrate recognition component of a DCX (DDB1-CUL4-X-box) E3 protein ligase complex that mediates the ubiquitination and subsequent proteasomal degradation of target proteins, such as MEIS2. Normal degradation of key regulatory proteins is required for normal limb outgrowth and expression of the fibroblast growth factor FGF8. Maintains presynaptic glutamate release and consequently cognitive functions, such as memory and learning, by negatively regulating large-conductance calcium-activated potassium (BK) channels in excitatory neurons. Likely to function by regulating the assembly and neuronal surface expression of BK channels via its interaction with KCNT1. May also be involved in regulating anxiety-like behaviors via a BK channel-independent mechanism. The polypeptide is Protein cereblon (CRBN) (Gallus gallus (Chicken)).